Here is a 144-residue protein sequence, read N- to C-terminus: Deoxyuridine 5'-triphosphate nucleotidohydrolase (144 aa).

Residues 63–65 (RSG), Asn-76, and 80–82 (TID) each bind substrate.

It belongs to the dUTPase family. Mg(2+) is required as a cofactor.

It catalyses the reaction dUTP + H2O = dUMP + diphosphate + H(+). It participates in pyrimidine metabolism; dUMP biosynthesis; dUMP from dCTP (dUTP route): step 2/2. In terms of biological role, this enzyme is involved in nucleotide metabolism: it produces dUMP, the immediate precursor of thymidine nucleotides and it decreases the intracellular concentration of dUTP so that uracil cannot be incorporated into DNA. This is Deoxyuridine 5'-triphosphate nucleotidohydrolase from Alkaliphilus metalliredigens (strain QYMF).